We begin with the raw amino-acid sequence, 1036 residues long: Exportin-T (1036 aa).

The protein belongs to the exportin family.

The protein resides in the nucleus. It localises to the cytoplasm. In terms of biological role, tRNA nucleus export receptor which facilitates tRNA translocation across the nuclear pore complex. Involved in pre-tRNA splicing, probably by affecting the interaction of pre-tRNA with splicing endonuclease. This chain is Exportin-T (LOS1), found in Phaeosphaeria nodorum (strain SN15 / ATCC MYA-4574 / FGSC 10173) (Glume blotch fungus).